Reading from the N-terminus, the 1280-residue chain is Clustered mitochondria protein homolog (1280 aa).

Polar residues predominate over residues 1 to 27 (MAASSNDASKSAMANSNVTTEVAQTPS). Disordered regions lie at residues 1-49 (MAAS…GQLP) and 169-189 (GLDQ…LADY). The span at 32-43 (VNGEVEATEEDG) shows a compositional bias: acidic residues. The 245-residue stretch at 338–582 (DLARTQESYL…RLTPLDVAWI (245 aa)) folds into the Clu domain. 3 disordered regions span residues 633 to 669 (KANK…EPEQ), 905 to 943 (GAAV…AVSL), and 1214 to 1280 (TGRN…TQKP). Residues 635–648 (NKARGGRRRLPKAQ) show a composition bias toward basic residues. The segment covering 649-669 (KKADAGKEVDGEKKAEAEPEQ) has biased composition (basic and acidic residues). Residues 1221-1235 (PAAATPSVSDAAAAA) show a composition bias toward low complexity. Residues 1245–1261 (VDQRKIEDLLKYIEGES) are compositionally biased toward basic and acidic residues. The span at 1265–1280 (PTKKRTQNPRKRTQKP) shows a compositional bias: basic residues.

This sequence belongs to the CLU family. As to quaternary structure, may associate with the eukaryotic translation initiation factor 3 (eIF-3) complex.

The protein resides in the cytoplasm. In terms of biological role, mRNA-binding protein involved in proper cytoplasmic distribution of mitochondria. In Phaeosphaeria nodorum (strain SN15 / ATCC MYA-4574 / FGSC 10173) (Glume blotch fungus), this protein is Clustered mitochondria protein homolog.